The chain runs to 407 residues: Uronyl 2-sulfotransferase (407 aa).

Residues 1 to 20 (MKKKQQQHPGGGTDPWPHGA) are disordered. Residues 1–49 (MKKKQQQHPGGGTDPWPHGAPVGGAPPCLGSCKRRIPLLPFLRFSLRDY) lie on the Cytoplasmic side of the membrane. The chain crosses the membrane as a helical; Signal-anchor for type II membrane protein span at residues 50–70 (GFCMATLLVFCLGSLFYQLSG). Over 71 to 407 (GPPRFLLDLR…EKWLEDIYKR (337 aa)) the chain is Lumenal. 3 N-linked (GlcNAc...) asparagine glycosylation sites follow: Asn-85, Asn-141, and Asn-156. His-169 is a catalytic residue. Asn-174 and Asn-320 each carry an N-linked (GlcNAc...) asparagine glycan. The span at 386–400 (TEEPIDDEEQDDEKW) shows a compositional bias: acidic residues. Positions 386–407 (TEEPIDDEEQDDEKWLEDIYKR) are disordered.

This sequence belongs to the sulfotransferase 3 family.

Its subcellular location is the golgi apparatus membrane. In terms of biological role, sulfotransferase that catalyzes the transfer of sulfate to the position 2 of uronyl residues in glycosaminoglycan chains. Has mainly activity toward iduronyl residues in dermatan sulfate, and weaker activity toward glucuronyl residues of chondroitin sulfate. Has no activity toward desulfated N-resulfated heparin. This chain is Uronyl 2-sulfotransferase, found in Mus musculus (Mouse).